The primary structure comprises 204 residues: Inner membrane protein BB_0250 (204 aa).

A run of 5 helical transmembrane segments spans residues 17–37, 58–78, 101–121, 139–159, and 172–192; these read IAYS…NVPI, ILIF…SFYI, YYYG…PFGV, FIVS…TLSF, and IKII…IIYV.

It belongs to the DedA family.

It is found in the cell inner membrane. Required for proper cell division and envelope integrity. In Borreliella burgdorferi (strain ATCC 35210 / DSM 4680 / CIP 102532 / B31) (Borrelia burgdorferi), this protein is Inner membrane protein BB_0250.